A 157-amino-acid chain; its full sequence is SsrA-binding protein (157 aa).

The interval 130–157 is disordered; the sequence is HDKRQDMAKKDSQRRIQKELGQRQKGME. The segment covering 132 to 157 has biased composition (basic and acidic residues); it reads KRQDMAKKDSQRRIQKELGQRQKGME.

It belongs to the SmpB family.

It localises to the cytoplasm. Functionally, required for rescue of stalled ribosomes mediated by trans-translation. Binds to transfer-messenger RNA (tmRNA), required for stable association of tmRNA with ribosomes. tmRNA and SmpB together mimic tRNA shape, replacing the anticodon stem-loop with SmpB. tmRNA is encoded by the ssrA gene; the 2 termini fold to resemble tRNA(Ala) and it encodes a 'tag peptide', a short internal open reading frame. During trans-translation Ala-aminoacylated tmRNA acts like a tRNA, entering the A-site of stalled ribosomes, displacing the stalled mRNA. The ribosome then switches to translate the ORF on the tmRNA; the nascent peptide is terminated with the 'tag peptide' encoded by the tmRNA and targeted for degradation. The ribosome is freed to recommence translation, which seems to be the essential function of trans-translation. This is SsrA-binding protein from Alkaliphilus metalliredigens (strain QYMF).